Reading from the N-terminus, the 467-residue chain is UDP-N-acetylmuramate--L-alanine ligase (467 aa).

An ATP-binding site is contributed by 112–118 (GTHGKTT).

Belongs to the MurCDEF family.

It is found in the cytoplasm. It carries out the reaction UDP-N-acetyl-alpha-D-muramate + L-alanine + ATP = UDP-N-acetyl-alpha-D-muramoyl-L-alanine + ADP + phosphate + H(+). Its pathway is cell wall biogenesis; peptidoglycan biosynthesis. Its function is as follows. Cell wall formation. This Paraburkholderia xenovorans (strain LB400) protein is UDP-N-acetylmuramate--L-alanine ligase.